We begin with the raw amino-acid sequence, 365 residues long: 2-aminoethylphosphonate--pyruvate transaminase (365 aa).

Position 194 is an N6-(pyridoxal phosphate)lysine (Lys-194).

Belongs to the class-V pyridoxal-phosphate-dependent aminotransferase family. PhnW subfamily. As to quaternary structure, homodimer. The cofactor is pyridoxal 5'-phosphate.

It catalyses the reaction (2-aminoethyl)phosphonate + pyruvate = phosphonoacetaldehyde + L-alanine. Functionally, involved in phosphonate degradation. The polypeptide is 2-aminoethylphosphonate--pyruvate transaminase (Bacillus cytotoxicus (strain DSM 22905 / CIP 110041 / 391-98 / NVH 391-98)).